A 262-amino-acid polypeptide reads, in one-letter code: Cell division protein ZapD (262 aa).

The protein belongs to the ZapD family. As to quaternary structure, interacts with FtsZ.

Its subcellular location is the cytoplasm. Its function is as follows. Cell division factor that enhances FtsZ-ring assembly. Directly interacts with FtsZ and promotes bundling of FtsZ protofilaments, with a reduction in FtsZ GTPase activity. The sequence is that of Cell division protein ZapD from Nitrosomonas europaea (strain ATCC 19718 / CIP 103999 / KCTC 2705 / NBRC 14298).